The following is an 85-amino-acid chain: Small ribosomal subunit protein uS17 (85 aa).

The protein belongs to the universal ribosomal protein uS17 family. As to quaternary structure, part of the 30S ribosomal subunit.

Its function is as follows. One of the primary rRNA binding proteins, it binds specifically to the 5'-end of 16S ribosomal RNA. The chain is Small ribosomal subunit protein uS17 from Syntrophus aciditrophicus (strain SB).